Consider the following 196-residue polypeptide: uncharacterized protein (196 aa).

It to H.influenzae HI_0431.

This is an uncharacterized protein from Salmonella typhi.